The sequence spans 270 residues: Extracellular metalloprotease MCYG_04966 (270 aa).

The first 19 residues, 1–19 (MRLSLFLSGLAAAGSIVSA), serve as a signal peptide directing secretion. N-linked (GlcNAc...) asparagine glycosylation occurs at Asn135. Zn(2+) is bound at residue His184. The active site involves Glu185. His188 lines the Zn(2+) pocket. The N-linked (GlcNAc...) asparagine glycan is linked to Asn199. A disordered region spans residues 208 to 227 (VADTPPQSKKTSGCPNSQDS). The span at 212–227 (PPQSKKTSGCPNSQDS) shows a compositional bias: polar residues. Cys221 and Cys247 are joined by a disulfide.

Belongs to the peptidase M43B family.

It is found in the secreted. Its function is as follows. Secreted metalloproteinase that allows assimilation of proteinaceous substrates. Plays a pivotal role as a pathogenicity determinant during infections and contributes to the ability of the pathogen to persist within the mammalian host. The chain is Extracellular metalloprotease MCYG_04966 from Arthroderma otae (strain ATCC MYA-4605 / CBS 113480) (Microsporum canis).